The primary structure comprises 401 residues: Chromatin modification-related protein EAF3 (401 aa).

The Tudor-knot domain occupies 13-98; the sequence is RCLAFHGPLM…DEWVGYDRIR (86 aa). The segment covering 39–53 has biased composition (polar residues); that stretch reads TSIPNDKPGGSSQAT. 2 disordered regions span residues 39 to 65 and 117 to 210; these read TSIP…GEDE and EAKK…NMLH. Basic and acidic residues-rich tracts occupy residues 54–63 and 117–126; these read KEIKPQKLGE and EAKKSLLEQQ. Residues 153 to 190 are compositionally biased toward low complexity; sequence SISKSTSQSFLTSSVSGRKSGRSSANSLHPGSSLRSSS. Serine 201 bears the Phosphoserine mark. The MRG domain occupies 216–399; it reads PTPKISLQIP…TSSQYEGVAL (184 aa).

Belongs to the MRG family. As to quaternary structure, component of the NuA4 histone acetyltransferase complex composed of at least ACT1, ARP4, YAF9, VID21, SWC4, EAF3, EAF5, EAF6, EAF7, EPL1, ESA1, TRA1 and YNG2.

The protein localises to the nucleus. Functionally, component of the NuA4 histone acetyltransferase complex which is involved in transcriptional activation of selected genes principally by acetylation of nucleosomal histone H4 and H2A. The NuA4 complex is also involved in DNA repair. This chain is Chromatin modification-related protein EAF3 (EAF3), found in Saccharomyces cerevisiae (strain ATCC 204508 / S288c) (Baker's yeast).